The chain runs to 237 residues: Ribonuclease 3 (237 aa).

The RNase III domain occupies 4–130 (IQILFQTLNI…LFGAIYLDLG (127 aa)). Mg(2+) is bound at residue Glu45. Asp49 is a catalytic residue. Asp116 and Glu119 together coordinate Mg(2+). Residue Glu119 is part of the active site. One can recognise a DRBM domain in the interval 154–222 (DFKTQLQEIV…AQQALSKVAK (69 aa)).

This sequence belongs to the ribonuclease III family. In terms of assembly, homodimer. Mg(2+) serves as cofactor.

The protein localises to the cytoplasm. The enzyme catalyses Endonucleolytic cleavage to 5'-phosphomonoester.. Its function is as follows. Digests double-stranded RNA. Involved in the processing of primary rRNA transcript to yield the immediate precursors to the large and small rRNAs (23S and 16S). Processes some mRNAs, and tRNAs when they are encoded in the rRNA operon. Processes pre-crRNA and tracrRNA of type II CRISPR loci if present in the organism. The chain is Ribonuclease 3 from Aster yellows witches'-broom phytoplasma (strain AYWB).